The chain runs to 537 residues: CTP synthase (537 aa).

The amidoligase domain stretch occupies residues Met1–Leu268. CTP is bound at residue Ser14. Ser14 is a binding site for UTP. Residue Ser15–Ile20 coordinates ATP. Tyr55 serves as a coordination point for L-glutamine. Residue Asp72 participates in ATP binding. Residues Asp72 and Glu142 each coordinate Mg(2+). CTP contacts are provided by residues Asp149–Glu151, Lys189–Gln194, and Lys225. Residues Lys189–Gln194 and Lys225 each bind UTP. In terms of domain architecture, Glutamine amidotransferase type-1 spans Glu293–Gly534. Gly354 contacts L-glutamine. The Nucleophile; for glutamine hydrolysis role is filled by Cys381. Residues Leu382–Gln385, Glu405, and Arg462 each bind L-glutamine. Catalysis depends on residues His507 and Glu509.

The protein belongs to the CTP synthase family. In terms of assembly, homotetramer.

The catalysed reaction is UTP + L-glutamine + ATP + H2O = CTP + L-glutamate + ADP + phosphate + 2 H(+). The enzyme catalyses L-glutamine + H2O = L-glutamate + NH4(+). It catalyses the reaction UTP + NH4(+) + ATP = CTP + ADP + phosphate + 2 H(+). The protein operates within pyrimidine metabolism; CTP biosynthesis via de novo pathway; CTP from UDP: step 2/2. Allosterically activated by GTP, when glutamine is the substrate; GTP has no effect on the reaction when ammonia is the substrate. The allosteric effector GTP functions by stabilizing the protein conformation that binds the tetrahedral intermediate(s) formed during glutamine hydrolysis. Inhibited by the product CTP, via allosteric rather than competitive inhibition. Functionally, catalyzes the ATP-dependent amination of UTP to CTP with either L-glutamine or ammonia as the source of nitrogen. Regulates intracellular CTP levels through interactions with the four ribonucleotide triphosphates. In Moorella thermoacetica (strain ATCC 39073 / JCM 9320), this protein is CTP synthase.